A 414-amino-acid polypeptide reads, in one-letter code: Histidine--tRNA ligase (414 aa).

This sequence belongs to the class-II aminoacyl-tRNA synthetase family. As to quaternary structure, homodimer.

Its subcellular location is the cytoplasm. The enzyme catalyses tRNA(His) + L-histidine + ATP = L-histidyl-tRNA(His) + AMP + diphosphate + H(+). This chain is Histidine--tRNA ligase, found in Anaeromyxobacter dehalogenans (strain 2CP-1 / ATCC BAA-258).